We begin with the raw amino-acid sequence, 126 residues long: Holo-[acyl-carrier-protein] synthase (126 aa).

Mg(2+) is bound by residues aspartate 6 and glutamate 55.

It belongs to the P-Pant transferase superfamily. AcpS family. It depends on Mg(2+) as a cofactor.

The protein resides in the cytoplasm. It catalyses the reaction apo-[ACP] + CoA = holo-[ACP] + adenosine 3',5'-bisphosphate + H(+). Transfers the 4'-phosphopantetheine moiety from coenzyme A to a Ser of acyl-carrier-protein. The protein is Holo-[acyl-carrier-protein] synthase of Chlorobium limicola (strain DSM 245 / NBRC 103803 / 6330).